A 78-amino-acid polypeptide reads, in one-letter code: Large ribosomal subunit protein bL28 (78 aa).

The disordered stretch occupies residues 1 to 23; the sequence is MSRICQITGKKPLSGNKRSHSMN.

This sequence belongs to the bacterial ribosomal protein bL28 family.

The polypeptide is Large ribosomal subunit protein bL28 (Wigglesworthia glossinidia brevipalpis).